Consider the following 204-residue polypeptide: Small rubber particle protein (204 aa).

It belongs to the REF/SRPP family. Auto-assembles in solution into stable nanomultimers of a globular nature. In terms of processing, not glycosylated. Post-translationally, the N-terminus is blocked. Consistent shifts of about 266 Da observed by MS in various forms of the intact protein suggest the addition of stearolyl groups. As to expression, highly expressed in the specialized vessel laticifers, but localized only in the laticifer layers in the conducting phloem. Also detected in leaves.

It localises to the cytoplasm. Its function is as follows. Involved in the biosynthesis of rubber, an isoprenoid polymer (cis-1,4-polyisoprene). The protein is Small rubber particle protein of Hevea brasiliensis (Para rubber tree).